A 765-amino-acid polypeptide reads, in one-letter code: Eukaryotic translation initiation factor 3 subunit B (765 aa).

Residues 1–136 (MKNFLPRTLK…LFVECGSMND (136 aa)) form a sufficient for interaction with HCR1 and TIF32 region. A sufficient for interaction with PIC8 region spans residues 28-261 (RNTQLKRSKI…GVTAWGGPNF (234 aa)). Serine 61 carries the post-translational modification Phosphoserine. Tyrosine 67 carries the phosphotyrosine modification. The RRM domain occupies 77–162 (QYIVVNGAPV…HRLFLYTMKD (86 aa)). Residue serine 671 is modified to Phosphoserine.

This sequence belongs to the eIF-3 subunit B family. In terms of assembly, component of the eukaryotic translation initiation factor 3 (eIF-3) complex.

It localises to the cytoplasm. RNA-binding component of the eukaryotic translation initiation factor 3 (eIF-3) complex, which is involved in protein synthesis of a specialized repertoire of mRNAs and, together with other initiation factors, stimulates binding of mRNA and methionyl-tRNAi to the 40S ribosome. The eIF-3 complex specifically targets and initiates translation of a subset of mRNAs involved in cell proliferation. This chain is Eukaryotic translation initiation factor 3 subunit B, found in Saccharomyces cerevisiae (strain YJM789) (Baker's yeast).